The chain runs to 423 residues: MAKLTESMTNVLEGDSMDQDVESPVAIHQPKLPKQARDDLPRHISRDRTKRKIQRYVRKDGKCNVHHGNVRETYRYLTDIFTTLVDLKWRFNLLIFVMVYTVTWLFFGMIWWLIAYIRGDMDHIEDPSWTPCVTNLNGFVSAFLFSIETETTIGYGYRVITDKCPEGIILLLIQSVLGSIVNAFMVGCMFVKISQPKKRAETLVFSTHAVISMRDGKLCLMFRVGDLRNSHIVEASIRAKLIKSKQTSEGEFIPLNQTDINVGYYTGDDRLFLVSPLIISHEINQQSPFWEISKAQLPKEELEIVVILEGMVEATGMTCQARSSYITSEILWGYRFTPVLTLEDGFYEVDYNSFHETYETSTPSLSAKELAELASRAELPLSWSVSSKLNQHAELETEEEEKNLEEQTERNGDVANLENESKV.

Residues 1 to 89 (MAKLTESMTN…IFTTLVDLKW (89 aa)) lie on the Cytoplasmic side of the membrane. Phosphoserine is present on residues Ser16 and Ser23. Residues 90-114 (RFNLLIFVMVYTVTWLFFGMIWWLI) traverse the membrane as a helical segment. The Extracellular segment spans residues 115-138 (AYIRGDMDHIEDPSWTPCVTNLNG). An intramembrane region (helical; Pore-forming) is located at residues 139-150 (FVSAFLFSIETE). Positions 151-157 (TTIGYGY) form an intramembrane region, pore-forming. A Selectivity filter motif is present at residues 152-157 (TIGYGY). Residues 158–166 (RVITDKCPE) lie on the Extracellular side of the membrane. A helical membrane pass occupies residues 167-188 (GIILLLIQSVLGSIVNAFMVGC). Residues 189 to 423 (MFVKISQPKK…VANLENESKV (235 aa)) are Cytoplasmic-facing. Residues 390 to 423 (NQHAELETEEEEKNLEEQTERNGDVANLENESKV) form a disordered region. The short motif at 420-423 (ESKV) is the PDZ-binding element.

This sequence belongs to the inward rectifier-type potassium channel (TC 1.A.2.1) family. KCNJ6 subfamily. As to quaternary structure, associates with KCNJ3/GIRK1 or KCNJ5/GRIK4 to form a G-protein-activated heteromultimer pore-forming unit. The resulting inward current is much larger. Interacts (via PDZ-binding motif) with SNX27 (via PDZ domain); the interaction is required when endocytosed to prevent degradation in lysosomes and promote recycling to the plasma membrane. In terms of tissue distribution, most abundant in cerebellum, and to a lesser degree in islets and exocrine pancreas.

The protein localises to the membrane. It carries out the reaction K(+)(in) = K(+)(out). Its activity is regulated as follows. Activated by phosphatidylinositol 4,5 biphosphate (PtdIns(4,5)P2). Inward rectifier potassium channels are characterized by a greater tendency to allow potassium to flow into the cell rather than out of it. Their voltage dependence is regulated by the concentration of extracellular potassium; as external potassium is raised, the voltage range of the channel opening shifts to more positive voltages. The inward rectification is mainly due to the blockage of outward current by internal magnesium. This potassium channel may be involved in the regulation of insulin secretion by glucose and/or neurotransmitters acting through G-protein-coupled receptors. This chain is G protein-activated inward rectifier potassium channel 2 (KCNJ6), found in Homo sapiens (Human).